The following is a 252-amino-acid chain: N-acetylglucosaminyl-phosphatidylinositol de-N-acetylase (252 aa).

A helical membrane pass occupies residues 2 to 22; sequence ELVGFLCVAVAVLTWGFLRVW. The Cytoplasmic segment spans residues 23–252; the sequence is NSAERMRSPE…YMRINSLRFL (230 aa).

It belongs to the PIGL family.

Its subcellular location is the endoplasmic reticulum membrane. The catalysed reaction is a 6-(N-acetyl-alpha-D-glucosaminyl)-1-(1,2-diacyl-sn-glycero-3-phospho)-1D-myo-inositol + H2O = a 6-(alpha-D-glucosaminyl)-1-(1,2-diacyl-sn-glycero-3-phospho)-1D-myo-inositol + acetate. It participates in glycolipid biosynthesis; glycosylphosphatidylinositol-anchor biosynthesis. In terms of biological role, catalyzes the second step of glycosylphosphatidylinositol (GPI) biosynthesis, which is the de-N-acetylation of N-acetylglucosaminyl-phosphatidylinositol. The polypeptide is N-acetylglucosaminyl-phosphatidylinositol de-N-acetylase (Pigl) (Mus musculus (Mouse)).